The primary structure comprises 245 residues: Complement C1q subcomponent subunit A (245 aa).

The first 22 residues, 1 to 22 (METSQGWLVACVLTMTLVWTVA), serve as a signal peptide directing secretion. Residues 28–114 (APNGKDGAPG…NPGNIRDQPR (87 aa)) form a disordered region. In terms of domain architecture, Collagen-like spans 31–109 (GKDGAPGNPG…KGVKGNPGNI (79 aa)). 2 positions are modified to 4-hydroxyproline: proline 39 and proline 45. At lysine 48 the chain carries 5-hydroxylysine. O-linked (Gal...) hydroxylysine; alternate glycosylation occurs at lysine 48. Position 54 is a 4-hydroxyproline (proline 54). Lysine 67 is subject to 5-hydroxylysine. Residue lysine 67 is glycosylated (O-linked (Gal...) hydroxylysine; alternate). Proline 79 and proline 85 each carry 4-hydroxyproline. The segment covering 79 to 99 (PGNVGLPGPSGPLGDSGPQGL) has biased composition (low complexity). Lysine 100 bears the 5-hydroxylysine mark. A glycan (O-linked (Gal...) hydroxylysine; alternate) is linked at lysine 100. The C1q domain maps to 110 to 245 (RDQPRPAFSA…FSGFLIFPSA (136 aa)). The N-linked (GlcNAc...) asparagine glycan is linked to asparagine 146. Ca(2+) is bound at residue glutamine 199.

As to quaternary structure, core component of the complement C1 complex, a calcium-dependent complex composed of 1 molecule of the C1Q subcomplex, 2 molecules of C1R and 2 molecules of C1S. The C1Q subcomplex is composed 18 subunits: 3 chains of C1QA, C1QB, and C1QC trimerize to form 6 collagen-like triple helices connected to six globular ligand-recognition modules (C1q domain). Interacts with CR1 (via Sushi 24 and Sushi 25 domains). Interacts (via C-terminus) with CD33; this interaction activates CD33 inhibitory motifs. In terms of processing, O-linked glycans are assumed to be the Glc-Gal disaccharides typically found as secondary modifications of hydroxylated lysines in collagen-like domains.

The protein resides in the secreted. Its subcellular location is the cell surface. With respect to regulation, the C1Q subcomplex is inhibited by sulfated molecules, such as triterpenoid sulfates, heparan sulfate, or chondroitin sulfates. Its function is as follows. Core component of the complement C1 complex, a multiprotein complex that initiates the classical pathway of the complement system, a cascade of proteins that leads to phagocytosis and breakdown of pathogens and signaling that strengthens the adaptive immune system. The classical complement pathway is initiated by the C1Q subcomplex of the C1 complex, which specifically binds IgG or IgM immunoglobulins complexed with antigens, forming antigen-antibody complexes on the surface of pathogens: C1QA, together with C1QB and C1QC, specifically recognizes and binds the Fc regions of IgG or IgM via its C1q domain. Immunoglobulin-binding activates the proenzyme C1R, which cleaves C1S, initiating the proteolytic cascade of the complement system. The C1Q subcomplex is activated by a hexamer of IgG complexed with antigens, while it is activated by a pentameric IgM. The C1Q subcomplex also recognizes and binds phosphatidylserine exposed on the surface of cells undergoing programmed cell death, possibly promoting activation of the complement system. This chain is Complement C1q subcomponent subunit A, found in Mus musculus (Mouse).